The sequence spans 364 residues: Histidinol-phosphate aminotransferase 1 (364 aa).

At Lys-211 the chain carries N6-(pyridoxal phosphate)lysine.

This sequence belongs to the class-II pyridoxal-phosphate-dependent aminotransferase family. Histidinol-phosphate aminotransferase subfamily. As to quaternary structure, homodimer. Pyridoxal 5'-phosphate is required as a cofactor.

It carries out the reaction L-histidinol phosphate + 2-oxoglutarate = 3-(imidazol-4-yl)-2-oxopropyl phosphate + L-glutamate. Its pathway is amino-acid biosynthesis; L-histidine biosynthesis; L-histidine from 5-phospho-alpha-D-ribose 1-diphosphate: step 7/9. This Legionella pneumophila (strain Lens) protein is Histidinol-phosphate aminotransferase 1.